The following is a 333-amino-acid chain: 4-hydroxyproline epimerase (333 aa).

The active-site Proton acceptor is Cys90. Residues 91-92 (GH) and Asp249 each bind substrate. Residue Cys253 is the Proton donor of the active site. 254 to 255 (GT) lines the substrate pocket.

It belongs to the proline racemase family. Homodimer.

The enzyme catalyses trans-4-hydroxy-L-proline = cis-4-hydroxy-D-proline. Allows intracellular utilization of 4-hydroxyproline, one of the major constituents of host collagen, by converting 4-hydroxy-L-proline to 4-hydroxy-D-proline, which can be further metabolized by intracellular 4-hydroxy-D-proline oxidases. Strong B-cell mitogen. Plays an important role in the regulation of intra- and extracellular amino acid pools, allowing the bacterium to profit from host precursors and enzymatic pathways. This Brucella canis (strain ATCC 23365 / NCTC 10854 / RM-666) protein is 4-hydroxyproline epimerase.